A 515-amino-acid polypeptide reads, in one-letter code: Bifunctional purine biosynthesis protein PurH (515 aa).

In terms of domain architecture, MGS-like spans 1–145 (MTKRALISVS…KNHASVTVVV (145 aa)).

Belongs to the PurH family.

It catalyses the reaction (6R)-10-formyltetrahydrofolate + 5-amino-1-(5-phospho-beta-D-ribosyl)imidazole-4-carboxamide = 5-formamido-1-(5-phospho-D-ribosyl)imidazole-4-carboxamide + (6S)-5,6,7,8-tetrahydrofolate. It carries out the reaction IMP + H2O = 5-formamido-1-(5-phospho-D-ribosyl)imidazole-4-carboxamide. It participates in purine metabolism; IMP biosynthesis via de novo pathway; 5-formamido-1-(5-phospho-D-ribosyl)imidazole-4-carboxamide from 5-amino-1-(5-phospho-D-ribosyl)imidazole-4-carboxamide (10-formyl THF route): step 1/1. Its pathway is purine metabolism; IMP biosynthesis via de novo pathway; IMP from 5-formamido-1-(5-phospho-D-ribosyl)imidazole-4-carboxamide: step 1/1. This is Bifunctional purine biosynthesis protein PurH from Streptococcus agalactiae serotype III (strain NEM316).